The chain runs to 373 residues: Alpha-ketoglutarate dependent kainoid synthase (373 aa).

The 117-residue stretch at 204–320 (TINSKKMFFT…RSSLITFYEP (117 aa)) folds into the Fe2OG dioxygenase domain. Positions 235, 237, and 296 each coordinate Fe cation. Arg-311 lines the 2-oxoglutarate pocket.

This sequence belongs to the iron/ascorbate-dependent oxidoreductase family. Requires Fe(2+) as cofactor.

The catalysed reaction is N-(7'-carboxy-7'-demethylgeranyl)-L-glutamate + 2-oxoglutarate + O2 = isodomoate A + succinate + CO2 + H2O. It carries out the reaction N-geranyl-L-glutamate + 2-oxoglutarate + O2 = dainate A + succinate + CO2 + H2O. It participates in secondary metabolite biosynthesis. Its function is as follows. Iron/ascorbate-dependent oxidoreductase: part of the gene cluster that mediates the biosynthesis of domoic acid (DA) and derivatives, natural products with neurochemical activity acting as ionotropic glutamate receptor (iGluR) agonists, thus being neurotoxins causing amnesic shellfish poisoning (ASP). Catalyzes the conversion of 7'-N-carboxy-L-geranyl-L-glutamic acid (cNGG) to isodomoic acid-A. Also mediates the conversion of N-geranyl-L-glutamic acid (L-NGG) to dainic acid A. This chain is Alpha-ketoglutarate dependent kainoid synthase, found in Pseudo-nitzschia multiseries (Marine planktonic diatom).